Reading from the N-terminus, the 558-residue chain is CTP synthase (558 aa).

The amidoligase domain stretch occupies residues 1–266; that stretch reads MSAKYIFVTG…DRLVMKYLRL (266 aa). Position 14 (S14) interacts with CTP. Position 14 (S14) interacts with UTP. ATP contacts are provided by residues 15–20 and D72; that span reads SLGKGL. Residues D72 and E140 each coordinate Mg(2+). Residues 147 to 149, 187 to 192, and K223 contribute to the CTP site; these read DIE and KTKPTQ. Residues 187-192 and K223 each bind UTP; that span reads KTKPTQ. ATP is bound at residue 239–241; it reads KDV. A Glutamine amidotransferase type-1 domain is found at 291–537; sequence IIGIIGKYVE…IGASYEHRMK (247 aa). Position 355 (G355) interacts with L-glutamine. Catalysis depends on C382, which acts as the Nucleophile; for glutamine hydrolysis. L-glutamine is bound by residues 383-386, E406, and R463; that span reads LGMQ. Residues H510 and E512 contribute to the active site. The segment at 539-558 is disordered; that stretch reads THTKEREEESVFLRPERVGK. Over residues 542 to 558 the composition is skewed to basic and acidic residues; it reads KEREEESVFLRPERVGK.

It belongs to the CTP synthase family. As to quaternary structure, homotetramer.

It carries out the reaction UTP + L-glutamine + ATP + H2O = CTP + L-glutamate + ADP + phosphate + 2 H(+). The enzyme catalyses L-glutamine + H2O = L-glutamate + NH4(+). The catalysed reaction is UTP + NH4(+) + ATP = CTP + ADP + phosphate + 2 H(+). Its pathway is pyrimidine metabolism; CTP biosynthesis via de novo pathway; CTP from UDP: step 2/2. Allosterically activated by GTP, when glutamine is the substrate; GTP has no effect on the reaction when ammonia is the substrate. The allosteric effector GTP functions by stabilizing the protein conformation that binds the tetrahedral intermediate(s) formed during glutamine hydrolysis. Inhibited by the product CTP, via allosteric rather than competitive inhibition. Its function is as follows. Catalyzes the ATP-dependent amination of UTP to CTP with either L-glutamine or ammonia as the source of nitrogen. Regulates intracellular CTP levels through interactions with the four ribonucleotide triphosphates. This is CTP synthase from Koribacter versatilis (strain Ellin345).